The primary structure comprises 682 residues: Pesticidal crystal protein Cry19Ba (682 aa).

It belongs to the delta endotoxin family.

In terms of biological role, promotes colloidosmotic lysis by binding to the midgut epithelial cells of mosquitos. Has larvicidal activity against Culex pipiens molestus, but not to Anopheles stephensi. The protein is Pesticidal crystal protein Cry19Ba of Bacillus thuringiensis subsp. higo.